Consider the following 101-residue polypeptide: Small ribosomal subunit protein uS14 (101 aa).

The protein belongs to the universal ribosomal protein uS14 family. In terms of assembly, part of the 30S ribosomal subunit. Contacts proteins S3 and S10.

Binds 16S rRNA, required for the assembly of 30S particles and may also be responsible for determining the conformation of the 16S rRNA at the A site. This Burkholderia multivorans (strain ATCC 17616 / 249) protein is Small ribosomal subunit protein uS14.